The following is a 429-amino-acid chain: Protein ABERRANT PANICLE ORGANIZATION 1 (429 aa).

Residues 1 to 11 (MMNPRRLPPLP) are compositionally biased toward pro residues. Residues 1 to 21 (MMNPRRLPPLPSSTSSASAAD) form a disordered region. An F-box domain is found at 25-71 (PRVWRRLPQPLVDRVLACLPTPSFLRLRAACRRFYHLLFSSPFLHSH). A run of 2 helical transmembrane segments spans residues 72-92 (LLLSPHLPFFAFVVPAAGHLL) and 112-132 (VAGGPAAFSPAAASAGLLAFL). 3 Kelch repeats span residues 229 to 277 (MAFA…ELGG), 284 to 339 (RVAL…AEGG), and 350 to 397 (YVVL…GAAG).

In terms of assembly, part of a putative SCF (ASK/Cullin/F-box) ubiquitin ligase complex. Interacts with FL/APO2. In terms of tissue distribution, expressed in seedlings, roots, leaves, shoot apical meristem (SAM), developing panicles, and, at lower levels, in developing seeds.

It localises to the membrane. The protein operates within protein modification; protein ubiquitination. In terms of biological role, component of SCF(ASK-cullin-F-box) E3 ubiquitin ligase complexes, which may mediate the ubiquitination and subsequent proteasomal degradation of target proteins. Together with FL/APO2, involved in the temporal regulation of meristem identity during both vegetative and reproductive developments in an APO2-dependent manner. Promotes spikelet formation by suppressing the precocious conversion of inflorescence meristems to spikelet meristems, probably via a positive regulation of class-C floral homeotic genes, but not of class-B genes, and through the control of cell proliferation in meristems. Mediates culm development and strength/diameter enhancement at internodes. Required for the regulation of the plastochron, floral organ identity, and floral determinacy. Controls the number of primary rachis branches (PRBs). May trigger the formation of vascular bundle systems which, consequently, promote carbohydrate translocation to panicles. Involved in ozone-induced grain yield regulation. The polypeptide is Protein ABERRANT PANICLE ORGANIZATION 1 (Oryza sativa subsp. indica (Rice)).